We begin with the raw amino-acid sequence, 104 residues long: Putative thioredoxin-4 (104 aa).

The 103-residue stretch at S2–K104 folds into the Thioredoxin domain. Residues C31 and C34 each act as nucleophile in the active site. C31 and C34 are oxidised to a cystine.

It belongs to the thioredoxin family.

Participates in various redox reactions through the reversible oxidation of its active center dithiol to a disulfide and catalyzes dithiol-disulfide exchange reactions. The chain is Putative thioredoxin-4 (trxD) from Dictyostelium discoideum (Social amoeba).